Here is a 630-residue protein sequence, read N- to C-terminus: 1-deoxy-D-xylulose-5-phosphate synthase (630 aa).

Residues H72 and 113–115 (GHS) contribute to the thiamine diphosphate site. D144 contacts Mg(2+). Thiamine diphosphate-binding positions include 145 to 146 (GA), N173, Y284, and E367. N173 contributes to the Mg(2+) binding site.

The protein belongs to the transketolase family. DXPS subfamily. Homodimer. Mg(2+) is required as a cofactor. It depends on thiamine diphosphate as a cofactor.

It carries out the reaction D-glyceraldehyde 3-phosphate + pyruvate + H(+) = 1-deoxy-D-xylulose 5-phosphate + CO2. It participates in metabolic intermediate biosynthesis; 1-deoxy-D-xylulose 5-phosphate biosynthesis; 1-deoxy-D-xylulose 5-phosphate from D-glyceraldehyde 3-phosphate and pyruvate: step 1/1. Its function is as follows. Catalyzes the acyloin condensation reaction between C atoms 2 and 3 of pyruvate and glyceraldehyde 3-phosphate to yield 1-deoxy-D-xylulose-5-phosphate (DXP). The sequence is that of 1-deoxy-D-xylulose-5-phosphate synthase from Geobacillus thermodenitrificans (strain NG80-2).